A 359-amino-acid polypeptide reads, in one-letter code: Tropomodulin-1 (359 aa).

Residues 36-61 form a disordered region; that stretch reads ELDPDNALLPAGLRQKDQTTKAPTGP. Residues 39 to 138 are tropomyosin-binding; that stretch reads PDNALLPAGL…CDIAAILGMH (100 aa).

It belongs to the tropomodulin family. Binds to the N-terminus of tropomyosin and to actin. Interacts with FLII.

The protein localises to the cytoplasm. Its subcellular location is the cytoskeleton. Its function is as follows. Blocks the elongation and depolymerization of the actin filaments at the pointed end. The Tmod/TM complex contributes to the formation of the short actin protofilament, which in turn defines the geometry of the membrane skeleton. This chain is Tropomodulin-1 (Tmod1), found in Rattus norvegicus (Rat).